The chain runs to 535 residues: CTP synthase (535 aa).

An amidoligase domain region spans residues 1–267 (MTKYIFVTGG…DQIVCDHLKL (267 aa)). Ser-13 contacts CTP. Position 13 (Ser-13) interacts with UTP. An ATP-binding site is contributed by 14–19 (SLGKGI). Tyr-54 contributes to the L-glutamine binding site. Asp-71 contacts ATP. Mg(2+)-binding residues include Asp-71 and Glu-141. Residues 148–150 (DIE), 188–193 (KTKPTQ), and Lys-224 each bind CTP. UTP-binding positions include 188–193 (KTKPTQ) and Lys-224. 240-242 (RDA) provides a ligand contact to ATP. Positions 292–534 (KIALVGKYVE…VRASITNKES (243 aa)) constitute a Glutamine amidotransferase type-1 domain. Gly-354 contacts L-glutamine. The Nucleophile; for glutamine hydrolysis role is filled by Cys-381. Residues 382–385 (LGMQ), Glu-405, and Arg-462 each bind L-glutamine. Active-site residues include His-507 and Glu-509.

Belongs to the CTP synthase family. Homotetramer.

The catalysed reaction is UTP + L-glutamine + ATP + H2O = CTP + L-glutamate + ADP + phosphate + 2 H(+). It catalyses the reaction L-glutamine + H2O = L-glutamate + NH4(+). It carries out the reaction UTP + NH4(+) + ATP = CTP + ADP + phosphate + 2 H(+). It functions in the pathway pyrimidine metabolism; CTP biosynthesis via de novo pathway; CTP from UDP: step 2/2. Its activity is regulated as follows. Allosterically activated by GTP, when glutamine is the substrate; GTP has no effect on the reaction when ammonia is the substrate. The allosteric effector GTP functions by stabilizing the protein conformation that binds the tetrahedral intermediate(s) formed during glutamine hydrolysis. Inhibited by the product CTP, via allosteric rather than competitive inhibition. Functionally, catalyzes the ATP-dependent amination of UTP to CTP with either L-glutamine or ammonia as the source of nitrogen. Regulates intracellular CTP levels through interactions with the four ribonucleotide triphosphates. The protein is CTP synthase of Bacillus cereus (strain ATCC 14579 / DSM 31 / CCUG 7414 / JCM 2152 / NBRC 15305 / NCIMB 9373 / NCTC 2599 / NRRL B-3711).